Consider the following 495-residue polypeptide: Transmembrane protein 161A (495 aa).

Residues 1–28 form the signal peptide; sequence MALMGVQLVVSLLAVSIMQRMAPHLSFA. Residues 29–99 lie on the Extracellular side of the membrane; sequence RWLLCNGSLL…VNVMDALVLR (71 aa). Asn34 carries N-linked (GlcNAc...) asparagine glycosylation. Residues 100–120 traverse the membrane as a helical segment; it reads FFVEYQWLIDFAVYATGIYLF. At 121–135 the chain is on the cytoplasmic side; sequence TEGYYSVVDASKEVN. The chain crosses the membrane as a helical span at residues 136–156; the sequence is IASIWCVLTVLFCLRTLYLLM. Residues 157–167 lie on the Extracellular side of the membrane; the sequence is SHYFLSEEGGE. The chain crosses the membrane as a helical span at residues 168 to 188; that stretch reads RSVCLAFGFLSLLIAMLVLVV. Over 189–227 the chain is Cytoplasmic; that stretch reads REDYLEFGLEPGFTSLFDNFEVFARKQGYEWSVPFTKLS. Residues 228 to 248 traverse the membrane as a helical segment; it reads VKLGLAVICAFIGALLAFPGL. The Extracellular segment spans residues 249 to 265; sequence RLAQTHLDAVQMNADRP. Residues 266–286 traverse the membrane as a helical segment; the sequence is MIQILLHMSFLSPLVIIVMWI. Residues 287–305 lie on the Cytoplasmic side of the membrane; the sequence is KPIARDFLGNAPMGKTSVT. A helical transmembrane segment spans residues 306-326; it reads LLSSSAFSSVRLWTIVVLCVL. Topologically, residues 327–367 are extracellular; the sequence is RLLLTRYHLQAYLNLAQKWVEQMKKEAGRIAAIDIQRKVTR. The chain crosses the membrane as a helical span at residues 368 to 388; it reads IFCYLTVVTLQYLIPILLVLF. Residues 389–465 are Cytoplasmic-facing; it reads STLALKSLGD…ALLTPIFFRG (77 aa). The helical transmembrane segment at 466–486 threads the bilayer; that stretch reads IFAFLTWWVAACQLISSLFGI. The Extracellular portion of the chain corresponds to 487 to 495; sequence YFHQYLMHN.

This sequence belongs to the TMEM161 family.

It is found in the membrane. In terms of biological role, may play a role in protection against oxidative stress. The chain is Transmembrane protein 161A (tmem161a) from Danio rerio (Zebrafish).